The sequence spans 138 residues: Small ribosomal subunit protein uS17 (138 aa).

2 stretches are compositionally biased toward basic and acidic residues: residues 1–18 and 43–55; these read MSEEERNRGAEPEERAEA and AFDRDAGKVQKDT. The disordered stretch occupies residues 1 to 62; that stretch reads MSEEERNRGA…KDTRRGRRKE (62 aa).

Belongs to the universal ribosomal protein uS17 family. In terms of assembly, part of the 30S ribosomal subunit.

In terms of biological role, one of the primary rRNA binding proteins, it binds specifically to the 5'-end of 16S ribosomal RNA. The sequence is that of Small ribosomal subunit protein uS17 from Rubrobacter xylanophilus (strain DSM 9941 / JCM 11954 / NBRC 16129 / PRD-1).